Here is a 265-residue protein sequence, read N- to C-terminus: Large ribosomal subunit protein eL8 (265 aa).

The protein belongs to the eukaryotic ribosomal protein eL8 family. In terms of assembly, interacts with cmd-1 in the presence of Ca(2+).

The polypeptide is Large ribosomal subunit protein eL8 (Caenorhabditis elegans).